Here is a 431-residue protein sequence, read N- to C-terminus: UDP-N-acetylmuramate--L-alanine ligase (431 aa).

108 to 114 (GAHGKST) is a binding site for ATP.

The protein belongs to the MurCDEF family.

The protein localises to the cytoplasm. It catalyses the reaction UDP-N-acetyl-alpha-D-muramate + L-alanine + ATP = UDP-N-acetyl-alpha-D-muramoyl-L-alanine + ADP + phosphate + H(+). The protein operates within cell wall biogenesis; peptidoglycan biosynthesis. Functionally, cell wall formation. This Campylobacter jejuni subsp. jejuni serotype O:23/36 (strain 81-176) protein is UDP-N-acetylmuramate--L-alanine ligase.